The primary structure comprises 393 residues: Lipid-A-disaccharide synthase (393 aa).

The protein belongs to the LpxB family.

The enzyme catalyses a lipid X + a UDP-2-N,3-O-bis[(3R)-3-hydroxyacyl]-alpha-D-glucosamine = a lipid A disaccharide + UDP + H(+). Its pathway is bacterial outer membrane biogenesis; LPS lipid A biosynthesis. Condensation of UDP-2,3-diacylglucosamine and 2,3-diacylglucosamine-1-phosphate to form lipid A disaccharide, a precursor of lipid A, a phosphorylated glycolipid that anchors the lipopolysaccharide to the outer membrane of the cell. In Bordetella bronchiseptica (strain ATCC BAA-588 / NCTC 13252 / RB50) (Alcaligenes bronchisepticus), this protein is Lipid-A-disaccharide synthase.